A 322-amino-acid chain; its full sequence is 4-hydroxythreonine-4-phosphate dehydrogenase (322 aa).

Thr132 lines the substrate pocket. Residues His160, His205, and His260 each coordinate a divalent metal cation. Residues Lys268, Asn277, and Arg286 each coordinate substrate.

This sequence belongs to the PdxA family. As to quaternary structure, homodimer. It depends on Zn(2+) as a cofactor. Requires Mg(2+) as cofactor. Co(2+) serves as cofactor.

Its subcellular location is the cytoplasm. The catalysed reaction is 4-(phosphooxy)-L-threonine + NAD(+) = 3-amino-2-oxopropyl phosphate + CO2 + NADH. It functions in the pathway cofactor biosynthesis; pyridoxine 5'-phosphate biosynthesis; pyridoxine 5'-phosphate from D-erythrose 4-phosphate: step 4/5. Functionally, catalyzes the NAD(P)-dependent oxidation of 4-(phosphooxy)-L-threonine (HTP) into 2-amino-3-oxo-4-(phosphooxy)butyric acid which spontaneously decarboxylates to form 3-amino-2-oxopropyl phosphate (AHAP). This Xanthomonas campestris pv. campestris (strain 8004) protein is 4-hydroxythreonine-4-phosphate dehydrogenase.